We begin with the raw amino-acid sequence, 338 residues long: Methionyl-tRNA formyltransferase (338 aa).

Position 110 to 113 (110 to 113 (SLLP)) interacts with (6S)-5,6,7,8-tetrahydrofolate.

This sequence belongs to the Fmt family.

It carries out the reaction L-methionyl-tRNA(fMet) + (6R)-10-formyltetrahydrofolate = N-formyl-L-methionyl-tRNA(fMet) + (6S)-5,6,7,8-tetrahydrofolate + H(+). Functionally, attaches a formyl group to the free amino group of methionyl-tRNA(fMet). The formyl group appears to play a dual role in the initiator identity of N-formylmethionyl-tRNA by promoting its recognition by IF2 and preventing the misappropriation of this tRNA by the elongation apparatus. In Parasynechococcus marenigrum (strain WH8102), this protein is Methionyl-tRNA formyltransferase.